A 223-amino-acid polypeptide reads, in one-letter code: Uracil-DNA glycosylase (223 aa).

Catalysis depends on Asp-61, which acts as the Proton acceptor.

This sequence belongs to the uracil-DNA glycosylase (UDG) superfamily. UNG family.

It localises to the cytoplasm. The enzyme catalyses Hydrolyzes single-stranded DNA or mismatched double-stranded DNA and polynucleotides, releasing free uracil.. Excises uracil residues from the DNA which can arise as a result of misincorporation of dUMP residues by DNA polymerase or due to deamination of cytosine. The polypeptide is Uracil-DNA glycosylase (Haemophilus ducreyi (strain 35000HP / ATCC 700724)).